Consider the following 528-residue polypeptide: Phosphoenolpyruvate carboxykinase (ATP) (528 aa).

Substrate contacts are provided by R56, Y192, and K198. ATP is bound by residues K198, H217, and 233-241; that span reads GLSGTGKTT. K198 and H217 together coordinate Mn(2+). D254 is a binding site for Mn(2+). Residues E282, R319, and T444 each coordinate ATP. R319 is a substrate binding site.

The protein belongs to the phosphoenolpyruvate carboxykinase (ATP) family. It depends on Mn(2+) as a cofactor.

The protein localises to the cytoplasm. The catalysed reaction is oxaloacetate + ATP = phosphoenolpyruvate + ADP + CO2. It functions in the pathway carbohydrate biosynthesis; gluconeogenesis. In terms of biological role, involved in the gluconeogenesis. Catalyzes the conversion of oxaloacetate (OAA) to phosphoenolpyruvate (PEP) through direct phosphoryl transfer between the nucleoside triphosphate and OAA. This chain is Phosphoenolpyruvate carboxykinase (ATP), found in Bacillus mycoides (strain KBAB4) (Bacillus weihenstephanensis).